The chain runs to 715 residues: Protein psiH (715 aa).

The N-terminal stretch at 1-20 (MNYLKPTIFLILCLVTFVYS) is a signal peptide. Topologically, residues 21-651 (QPSTLTIQGT…ICKTGAVVST (631 aa)) are extracellular. The 142-residue stretch at 115 to 256 (NYDSKKQVYV…YDYCGVCSGD (142 aa)) folds into the PA14 domain. N-linked (GlcNAc...) asparagine glycosylation is found at asparagine 149, asparagine 377, asparagine 528, and asparagine 622. A helical transmembrane segment spans residues 652–672 (AVIAGVTVAGAVALGVFIYGG). Residues 673 to 715 (KRGYDYWKESRNVQFSGSNSNPLYEQNPNGSGVNPLYNDNSAL) lie on the Cytoplasmic side of the membrane. The tract at residues 690-715 (SNSNPLYEQNPNGSGVNPLYNDNSAL) is disordered.

This sequence belongs to the prespore-cell-inducing factor family.

The protein localises to the membrane. The protein is Protein psiH (psiH) of Dictyostelium discoideum (Social amoeba).